The following is a 543-amino-acid chain: 2,3-bisphosphoglycerate-independent phosphoglycerate mutase (543 aa).

The Mn(2+) site is built by D24 and S74. Residue S74 is the Phosphoserine intermediate of the active site. Substrate-binding positions include H135, 165 to 166 (RD), R197, R203, 268 to 271 (RPDR), and K341. 5 residues coordinate Mn(2+): D408, H412, D449, H450, and H467.

The protein belongs to the BPG-independent phosphoglycerate mutase family. In terms of assembly, monomer. Mn(2+) is required as a cofactor.

The enzyme catalyses (2R)-2-phosphoglycerate = (2R)-3-phosphoglycerate. It participates in carbohydrate degradation; glycolysis; pyruvate from D-glyceraldehyde 3-phosphate: step 3/5. Functionally, catalyzes the interconversion of 2-phosphoglycerate and 3-phosphoglycerate. The sequence is that of 2,3-bisphosphoglycerate-independent phosphoglycerate mutase from Parasynechococcus marenigrum (strain WH8102).